A 742-amino-acid chain; its full sequence is Kanadaptin (742 aa).

Polar residues predominate over residues 1 to 16 (MADILSQSETLASQDL). The disordered stretch occupies residues 1–112 (MADILSQSET…PPWGGPATAP (112 aa)). The span at 27 to 43 (VSPAARSKAPASSSSNP) shows a compositional bias: low complexity. Serine 28 is modified (phosphoserine). A compositionally biased stretch (basic and acidic residues) spans 72–82 (GDFRSLQEEQS). Residue serine 90 is modified to Phosphoserine. A compositionally biased stretch (pro residues) spans 96-106 (RAPPYQEPPWG). The 61-residue stretch at 135–195 (CLFGRLSGCD…HGTFLNKTRI (61 aa)) folds into the FHA domain. Residues 254 to 282 (LGEDSDEEEEMDTSERKINAGSQDDEMGC) are disordered. The segment covering 256–265 (EDSDEEEEMD) has biased composition (acidic residues). Phosphoserine occurs at positions 258 and 412. A Glycyl lysine isopeptide (Lys-Gly) (interchain with G-Cter in SUMO2) cross-link involves residue lysine 441. Residues 443-476 (ETFESLVAKLNDAERELSEISERLKASSQVLSES) are a coiled coil. Serine 476 carries the post-translational modification Phosphoserine. The disordered stretch occupies residues 565–742 (LKTGTVGKLP…RTHLNDKYGY (178 aa)). The span at 591–606 (PEVEEEEEEEEEEEKE) shows a compositional bias: acidic residues. Basic and acidic residues predominate over residues 607 to 619 (KEEHEKKKLEDGS). 2 positions are modified to phosphoserine: serine 655 and serine 658. Over residues 699 to 708 (PGPGKLPPTL) the composition is skewed to low complexity. Positions 732–742 (GRTHLNDKYGY) are enriched in basic and acidic residues.

Ubiquitously expressed.

Its subcellular location is the nucleus. It localises to the cytoplasm. The protein is Kanadaptin (SLC4A1AP) of Homo sapiens (Human).